Consider the following 202-residue polypeptide: FMN-dependent NADH:quinone oxidoreductase (202 aa).

FMN contacts are provided by residues serine 9 and methionine 95–phenylalanine 98.

Belongs to the azoreductase type 1 family. In terms of assembly, homodimer. The cofactor is FMN.

The catalysed reaction is 2 a quinone + NADH + H(+) = 2 a 1,4-benzosemiquinone + NAD(+). It catalyses the reaction N,N-dimethyl-1,4-phenylenediamine + anthranilate + 2 NAD(+) = 2-(4-dimethylaminophenyl)diazenylbenzoate + 2 NADH + 2 H(+). Quinone reductase that provides resistance to thiol-specific stress caused by electrophilic quinones. Functionally, also exhibits azoreductase activity. Catalyzes the reductive cleavage of the azo bond in aromatic azo compounds to the corresponding amines. The chain is FMN-dependent NADH:quinone oxidoreductase from Chromobacterium violaceum (strain ATCC 12472 / DSM 30191 / JCM 1249 / CCUG 213 / NBRC 12614 / NCIMB 9131 / NCTC 9757 / MK).